Consider the following 41-residue polypeptide: Photosystem I reaction center subunit IX (41 aa).

Residues 7–27 (YLSTAPVVAFAWITITAGLLI) traverse the membrane as a helical segment.

This sequence belongs to the PsaJ family.

Its subcellular location is the plastid. It is found in the chloroplast thylakoid membrane. Functionally, may help in the organization of the PsaE and PsaF subunits. In Oedogonium cardiacum (Filamentous green alga), this protein is Photosystem I reaction center subunit IX.